Consider the following 417-residue polypeptide: Serine hydroxymethyltransferase (417 aa).

N6-acetyllysine is present on K54. Residues L121 and 125-127 (GHL) each bind (6S)-5,6,7,8-tetrahydrofolate. The residue at position 229 (K229) is an N6-(pyridoxal phosphate)lysine. An N6-acetyllysine mark is found at K250, K285, and K354. 355–357 (SPF) serves as a coordination point for (6S)-5,6,7,8-tetrahydrofolate. K375 is modified (N6-acetyllysine).

It belongs to the SHMT family. In terms of assembly, homodimer. Pyridoxal 5'-phosphate serves as cofactor.

The protein localises to the cytoplasm. The enzyme catalyses (6R)-5,10-methylene-5,6,7,8-tetrahydrofolate + glycine + H2O = (6S)-5,6,7,8-tetrahydrofolate + L-serine. Its pathway is one-carbon metabolism; tetrahydrofolate interconversion. It participates in amino-acid biosynthesis; glycine biosynthesis; glycine from L-serine: step 1/1. Functionally, catalyzes the reversible interconversion of serine and glycine with tetrahydrofolate (THF) serving as the one-carbon carrier. This reaction serves as the major source of one-carbon groups required for the biosynthesis of purines, thymidylate, methionine, and other important biomolecules. Also exhibits THF-independent aldolase activity toward beta-hydroxyamino acids, producing glycine and aldehydes, via a retro-aldol mechanism. This Shigella sonnei (strain Ss046) protein is Serine hydroxymethyltransferase.